The following is a 333-amino-acid chain: MSSTSLPSSGKPLKLRINRDSEGYLSLVTESGEIYRCPICGNDRFVYNYERGEVVCIVCGAVVQEQLLDLGPEWRAFTSEEKGQRARTGAPLTRLISEALTTVIDWRDKDVSGRELDIKRKLEVIRLRKWQTRARVQTSYERNFIQAAQELERLKSSMGVPRPCVEQALEIYRQALEKELVRGRSVEAMAAAALYMACRMMRMPRPLDELVRYTKASRREVARCYRLLLRELNVKVPISDPVLYISRIAEQLKLSGEVVKAAIDILQRAKKAGITAGKDPAGLAAAAVYIASLMHGDNRTQKDFAVAAGVTEVTVRNRYKELAKALNIKVPVK.

A TFIIB-type zinc finger spans residues Glu33–Gln64. Residues Cys37, Cys40, Cys56, and Cys59 each contribute to the Zn(2+) site. A run of 2 repeats spans residues Gln149–Leu232 and Leu243–Lys324.

The protein belongs to the TFIIB family.

Functionally, stabilizes TBP binding to an archaeal box-A promoter. Also responsible for recruiting RNA polymerase II to the pre-initiation complex (DNA-TBP-TFIIB). This Pyrobaculum arsenaticum (strain DSM 13514 / JCM 11321 / PZ6) protein is Transcription initiation factor IIB.